Consider the following 344-residue polypeptide: MAP3K12-binding inhibitory protein 1 (344 aa).

Phosphoserine is present on serine 91. Glycyl lysine isopeptide (Lys-Gly) (interchain with G-Cter in SUMO2) cross-links involve residues lysine 94, lysine 118, lysine 129, lysine 139, lysine 153, and lysine 235. Positions 172–344 (AEINENNVRE…AESMATHHLP (173 aa)) are interaction with MAP3K12. Positions 271-285 (IYQRIKKLEDKILEL) are leucine-zipper 1. The residue at position 301 (lysine 301) is an N6-acetyllysine; alternate. Residue lysine 301 forms a Glycyl lysine isopeptide (Lys-Gly) (interchain with G-Cter in SUMO2); alternate linkage. Residues lysine 304 and lysine 325 each participate in a glycyl lysine isopeptide (Lys-Gly) (interchain with G-Cter in SUMO2) cross-link. Residues 314–329 (LAELDEKISALKQALL) are leucine-zipper 2.

In terms of assembly, component of the ADA2A-containing complex (ATAC), composed of KAT14, KAT2A, TADA2L, TADA3L, ZZ3, MBIP, WDR5, YEATS2, CCDC101 and DR1. In the complex, it probably interacts directly with KAT2A, KAT14 and WDR5. Ubiquitous. High expression seen in the heart and lung.

The protein localises to the nucleus. Its subcellular location is the cytoplasm. Inhibits the MAP3K12 activity to induce the activation of the JNK/SAPK pathway. Component of the ATAC complex, a complex with histone acetyltransferase activity on histones H3 and H4. The protein is MAP3K12-binding inhibitory protein 1 (MBIP) of Homo sapiens (Human).